A 282-amino-acid chain; its full sequence is Ribosomal RNA small subunit methyltransferase A (282 aa).

H15, L17, G42, E64, D89, and N109 together coordinate S-adenosyl-L-methionine.

It belongs to the class I-like SAM-binding methyltransferase superfamily. rRNA adenine N(6)-methyltransferase family. RsmA subfamily.

Its subcellular location is the cytoplasm. It catalyses the reaction adenosine(1518)/adenosine(1519) in 16S rRNA + 4 S-adenosyl-L-methionine = N(6)-dimethyladenosine(1518)/N(6)-dimethyladenosine(1519) in 16S rRNA + 4 S-adenosyl-L-homocysteine + 4 H(+). Specifically dimethylates two adjacent adenosines (A1518 and A1519) in the loop of a conserved hairpin near the 3'-end of 16S rRNA in the 30S particle. May play a critical role in biogenesis of 30S subunits. The protein is Ribosomal RNA small subunit methyltransferase A of Prochlorococcus marinus (strain MIT 9211).